A 430-amino-acid polypeptide reads, in one-letter code: Aspartate aminotransferase, mitochondrial (430 aa).

The N-terminal 29 residues, 1-29 (MALLHSGRALPGIAAAFHPGLAAAASARA), are a transit peptide targeting the mitochondrion. Residue Thr48 is modified to Phosphothreonine. Lys59 is modified (N6-acetyllysine). Position 65 (Gly65) interacts with substrate. Lys73 is subject to N6-acetyllysine; alternate. Lys73 is subject to N6-succinyllysine; alternate. Residue Lys82 is modified to N6-acetyllysine. The residue at position 90 (Lys90) is an N6-acetyllysine; alternate. An N6-succinyllysine; alternate modification is found at Lys90. 3'-nitrotyrosine; alternate is present on Tyr96. Tyr96 carries the post-translational modification Phosphotyrosine; alternate. Residues Lys107 and Lys122 each carry the N6-acetyllysine; alternate modification. An N6-succinyllysine; alternate mark is found at Lys107 and Lys122. Ser143 is subject to Phosphoserine. Residue Lys159 is modified to N6-acetyllysine; alternate. Lys159 bears the N6-succinyllysine; alternate mark. Trp162 provides a ligand contact to substrate. At Lys185 the chain carries N6-acetyllysine; alternate. Residue Lys185 is modified to N6-succinyllysine; alternate. Substrate is bound at residue Asn215. Lys227 is subject to N6-succinyllysine. Lys234 bears the N6-acetyllysine mark. N6-acetyllysine; alternate is present on residues Lys279 and Lys296. Lys279 bears the N6-(pyridoxal phosphate)lysine; alternate mark. Lys296 is modified (N6-succinyllysine; alternate). The residue at position 302 (Lys302) is an N6-acetyllysine. Position 309 is an N6-acetyllysine; alternate (Lys309). At Lys309 the chain carries N6-succinyllysine; alternate. Arg313 is modified (asymmetric dimethylarginine). Residue Thr333 is modified to Phosphothreonine. Lys338 bears the N6-acetyllysine; alternate mark. Lys338 bears the N6-succinyllysine; alternate mark. Lys345 is subject to N6-acetyllysine. Lys363 is modified (N6-acetyllysine; alternate). Lys363 carries the N6-succinyllysine; alternate modification. N6-acetyllysine occurs at positions 364 and 387. 2 positions are modified to N6-acetyllysine; alternate: Lys396 and Lys404. N6-succinyllysine; alternate is present on residues Lys396 and Lys404. Arg407 is a substrate binding site.

Belongs to the class-I pyridoxal-phosphate-dependent aminotransferase family. Homodimer. The cofactor is pyridoxal 5'-phosphate.

The protein resides in the mitochondrion matrix. Its subcellular location is the cell membrane. It carries out the reaction L-aspartate + 2-oxoglutarate = oxaloacetate + L-glutamate. The enzyme catalyses L-kynurenine + 2-oxoglutarate = kynurenate + L-glutamate + H2O. In terms of biological role, catalyzes the irreversible transamination of the L-tryptophan metabolite L-kynurenine to form kynurenic acid (KA). As a member of the malate-aspartate shuttle, it has a key role in the intracellular NAD(H) redox balance. Is important for metabolite exchange between mitochondria and cytosol, and for amino acid metabolism. Facilitates cellular uptake of long-chain free fatty acids. The chain is Aspartate aminotransferase, mitochondrial (GOT2) from Pongo abelii (Sumatran orangutan).